An 81-amino-acid polypeptide reads, in one-letter code: Acyl carrier protein (81 aa).

Residues A2–Q80 enclose the Carrier domain. Residue S40 is modified to O-(pantetheine 4'-phosphoryl)serine.

It belongs to the acyl carrier protein (ACP) family. 4'-phosphopantetheine is transferred from CoA to a specific serine of apo-ACP by AcpS. This modification is essential for activity because fatty acids are bound in thioester linkage to the sulfhydryl of the prosthetic group.

The protein localises to the cytoplasm. It functions in the pathway lipid metabolism; fatty acid biosynthesis. Its function is as follows. Carrier of the growing fatty acid chain in fatty acid biosynthesis. The protein is Acyl carrier protein of Paenarthrobacter aurescens (strain TC1).